Consider the following 334-residue polypeptide: tRNA N6-adenosine threonylcarbamoyltransferase (334 aa).

The Fe cation site is built by His-112 and His-116. Substrate is bound by residues 135–139 (VVSGG), Asp-168, Gly-181, Asp-185, and Asn-274. Residue Asp-303 coordinates Fe cation.

The protein belongs to the KAE1 / TsaD family. Requires Fe(2+) as cofactor.

It localises to the cytoplasm. It catalyses the reaction L-threonylcarbamoyladenylate + adenosine(37) in tRNA = N(6)-L-threonylcarbamoyladenosine(37) in tRNA + AMP + H(+). Required for the formation of a threonylcarbamoyl group on adenosine at position 37 (t(6)A37) in tRNAs that read codons beginning with adenine. Is involved in the transfer of the threonylcarbamoyl moiety of threonylcarbamoyl-AMP (TC-AMP) to the N6 group of A37, together with TsaE and TsaB. TsaD likely plays a direct catalytic role in this reaction. The protein is tRNA N6-adenosine threonylcarbamoyltransferase of Anaeromyxobacter dehalogenans (strain 2CP-C).